Here is a 108-residue protein sequence, read N- to C-terminus: UPF0145 protein THA_1434 (108 aa).

Belongs to the UPF0145 family.

The chain is UPF0145 protein THA_1434 from Thermosipho africanus (strain TCF52B).